Consider the following 298-residue polypeptide: ATP phosphoribosyltransferase (298 aa).

This sequence belongs to the ATP phosphoribosyltransferase family. Long subfamily. The cofactor is Mg(2+).

Its subcellular location is the cytoplasm. The enzyme catalyses 1-(5-phospho-beta-D-ribosyl)-ATP + diphosphate = 5-phospho-alpha-D-ribose 1-diphosphate + ATP. It functions in the pathway amino-acid biosynthesis; L-histidine biosynthesis; L-histidine from 5-phospho-alpha-D-ribose 1-diphosphate: step 1/9. With respect to regulation, feedback inhibited by histidine. Catalyzes the condensation of ATP and 5-phosphoribose 1-diphosphate to form N'-(5'-phosphoribosyl)-ATP (PR-ATP). Has a crucial role in the pathway because the rate of histidine biosynthesis seems to be controlled primarily by regulation of HisG enzymatic activity. This is ATP phosphoribosyltransferase (hisG) from Photobacterium profundum (strain SS9).